The sequence spans 663 residues: DNA ligase (663 aa).

NAD(+)-binding positions include 33-37, 82-83, and glutamate 112; these read DYSYD and SI. The active-site N6-AMP-lysine intermediate is the lysine 114. Positions 135, 171, 285, and 309 each coordinate NAD(+). Positions 403, 406, 419, and 424 each coordinate Zn(2+). In terms of domain architecture, BRCT spans 581 to 663; it reads DKEAPLQGKV…LRILDAKSVS (83 aa).

This sequence belongs to the NAD-dependent DNA ligase family. LigA subfamily. Requires Mg(2+) as cofactor. Mn(2+) is required as a cofactor.

The enzyme catalyses NAD(+) + (deoxyribonucleotide)n-3'-hydroxyl + 5'-phospho-(deoxyribonucleotide)m = (deoxyribonucleotide)n+m + AMP + beta-nicotinamide D-nucleotide.. Its function is as follows. DNA ligase that catalyzes the formation of phosphodiester linkages between 5'-phosphoryl and 3'-hydroxyl groups in double-stranded DNA using NAD as a coenzyme and as the energy source for the reaction. It is essential for DNA replication and repair of damaged DNA. This chain is DNA ligase, found in Chlamydia trachomatis serovar D (strain ATCC VR-885 / DSM 19411 / UW-3/Cx).